The following is a 187-amino-acid chain: Troponin I, slow skeletal muscle (187 aa).

An N-acetylproline modification is found at P2. The interval 2–48 (PEVERKSKITASRKLMLKSLMLAKAKECWEQEHEEREAEKVRYLSER) is involved in binding TNC. A Phosphoserine modification is found at S58. Residues 97 to 118 (LKLKVLDLRGKFKRPPLRRVRV) are involved in binding TNC and actin.

Belongs to the troponin I family. As to quaternary structure, binds to actin and tropomyosin.

Functionally, troponin I is the inhibitory subunit of troponin, the thin filament regulatory complex which confers calcium-sensitivity to striated muscle actomyosin ATPase activity. The sequence is that of Troponin I, slow skeletal muscle (Tnni1) from Mus musculus (Mouse).